The primary structure comprises 325 residues: tRNA(Ile)-lysidine synthase (325 aa).

35 to 40 (SGGQDS) lines the ATP pocket.

It belongs to the tRNA(Ile)-lysidine synthase family.

The protein resides in the cytoplasm. The catalysed reaction is cytidine(34) in tRNA(Ile2) + L-lysine + ATP = lysidine(34) in tRNA(Ile2) + AMP + diphosphate + H(+). Functionally, ligates lysine onto the cytidine present at position 34 of the AUA codon-specific tRNA(Ile) that contains the anticodon CAU, in an ATP-dependent manner. Cytidine is converted to lysidine, thus changing the amino acid specificity of the tRNA from methionine to isoleucine. This is tRNA(Ile)-lysidine synthase from Gloeobacter violaceus (strain ATCC 29082 / PCC 7421).